Here is a 91-residue protein sequence, read N- to C-terminus: Small ribosomal subunit protein uS15 (91 aa).

This sequence belongs to the universal ribosomal protein uS15 family. Part of the 30S ribosomal subunit. Forms a bridge to the 50S subunit in the 70S ribosome, contacting the 23S rRNA.

In terms of biological role, one of the primary rRNA binding proteins, it binds directly to 16S rRNA where it helps nucleate assembly of the platform of the 30S subunit by binding and bridging several RNA helices of the 16S rRNA. Functionally, forms an intersubunit bridge (bridge B4) with the 23S rRNA of the 50S subunit in the ribosome. The sequence is that of Small ribosomal subunit protein uS15 from Amoebophilus asiaticus (strain 5a2).